A 679-amino-acid polypeptide reads, in one-letter code: Methionine--tRNA ligase (679 aa).

The short motif at 14–24 (PYANGSIHLGH) is the 'HIGH' region element. Cys145, Cys148, Cys158, and Cys161 together coordinate Zn(2+). A 'KMSKS' region motif is present at residues 331–335 (KMSKS). Lys334 contacts ATP. One can recognise a tRNA-binding domain in the interval 577–679 (TFAAVDLRVA…SGAKPGQRIK (103 aa)).

The protein belongs to the class-I aminoacyl-tRNA synthetase family. MetG type 1 subfamily. Homodimer. Requires Zn(2+) as cofactor.

The protein localises to the cytoplasm. It catalyses the reaction tRNA(Met) + L-methionine + ATP = L-methionyl-tRNA(Met) + AMP + diphosphate. In terms of biological role, is required not only for elongation of protein synthesis but also for the initiation of all mRNA translation through initiator tRNA(fMet) aminoacylation. This Pseudomonas putida (strain ATCC 47054 / DSM 6125 / CFBP 8728 / NCIMB 11950 / KT2440) protein is Methionine--tRNA ligase.